We begin with the raw amino-acid sequence, 179 residues long: Large ribosomal subunit protein uL6 (179 aa).

The protein belongs to the universal ribosomal protein uL6 family. Part of the 50S ribosomal subunit.

This protein binds to the 23S rRNA, and is important in its secondary structure. It is located near the subunit interface in the base of the L7/L12 stalk, and near the tRNA binding site of the peptidyltransferase center. This Alkaliphilus metalliredigens (strain QYMF) protein is Large ribosomal subunit protein uL6.